Here is a 336-residue protein sequence, read N- to C-terminus: DNA repair protein RAD51 homolog B (336 aa).

Positions 45 to 74 (TVEAVAYAPKKELLNIKGISEAKAEKILAE) constitute a HhH domain. Position 124 to 131 (124 to 131 (GEFRTGKT)) interacts with ATP. Residues 242–257 (LARFLRMLLRLADEFG) carry the Nuclear export signal motif.

Belongs to the RecA family. RAD51 subfamily. In terms of assembly, forms linear homooligomers, giving rise to a RAD51 nucleoprotein filament, which is essential for strand-pairing reactions during DNA recombination.

It is found in the nucleus. Its subcellular location is the cytoplasm. The protein localises to the chromosome. In terms of biological role, plays an important role in homologous strand exchange, a key step in DNA repair through homologous recombination (HR). Binds to single-stranded DNA in an ATP-dependent manner to form nucleoprotein filaments which are essential for the homology search and strand exchange. Catalyzes the recognition of homology and strand exchange between homologous DNA partners to form a joint molecule between a processed DNA break and the repair template. Recruited to resolve stalled replication forks during replication stress. Also involved in interstrand cross-link repair. This chain is DNA repair protein RAD51 homolog B (rad51-b), found in Xenopus laevis (African clawed frog).